Here is a 152-residue protein sequence, read N- to C-terminus: Transcriptional regulator MraZ (152 aa).

SpoVT-AbrB domains are found at residues 5-52 and 81-124; these read ASAI…PLEA and AHEC…DEAA.

It belongs to the MraZ family. In terms of assembly, forms oligomers.

The protein resides in the cytoplasm. Its subcellular location is the nucleoid. The sequence is that of Transcriptional regulator MraZ from Shewanella loihica (strain ATCC BAA-1088 / PV-4).